A 383-amino-acid chain; its full sequence is uncharacterized protein (383 aa).

Belongs to the peptidase M20 family.

This is an uncharacterized protein from Staphylococcus aureus (strain MRSA252).